We begin with the raw amino-acid sequence, 271 residues long: GPN-loop GTPase 3 (271 aa).

13–18 (GAGKST) serves as a coordination point for GTP. The short motif at 70 to 72 (GPN) is the Gly-Pro-Asn (GPN)-loop; involved in dimer interface element. 173–176 (SKLD) lines the GTP pocket.

Belongs to the GPN-loop GTPase family. As to quaternary structure, heterodimers with GPN1 or GPN2. Binds to RNA polymerase II (RNAPII).

Small GTPase required for proper nuclear import of RNA polymerase II and III (RNAPII and RNAPIII). May act at an RNAP assembly step prior to nuclear import. In Candida glabrata (strain ATCC 2001 / BCRC 20586 / JCM 3761 / NBRC 0622 / NRRL Y-65 / CBS 138) (Yeast), this protein is GPN-loop GTPase 3.